The chain runs to 149 residues: Transcriptional repressor NrdR (149 aa).

A zinc finger lies at C3 to C34. Positions P49–E139 constitute an ATP-cone domain.

This sequence belongs to the NrdR family. Requires Zn(2+) as cofactor.

In terms of biological role, negatively regulates transcription of bacterial ribonucleotide reductase nrd genes and operons by binding to NrdR-boxes. The protein is Transcriptional repressor NrdR of Acidovorax sp. (strain JS42).